Here is a 548-residue protein sequence, read N- to C-terminus: Chaperonin GroEL 1 (548 aa).

ATP-binding positions include 30 to 33 (TLGP), Lys51, 87 to 91 (DGTTT), Gly415, 479 to 481 (NAA), and Asp495.

The protein belongs to the chaperonin (HSP60) family. Forms a cylinder of 14 subunits composed of two heptameric rings stacked back-to-back. Interacts with the co-chaperonin GroES.

Its subcellular location is the cytoplasm. The enzyme catalyses ATP + H2O + a folded polypeptide = ADP + phosphate + an unfolded polypeptide.. Functionally, together with its co-chaperonin GroES, plays an essential role in assisting protein folding. The GroEL-GroES system forms a nano-cage that allows encapsulation of the non-native substrate proteins and provides a physical environment optimized to promote and accelerate protein folding. The sequence is that of Chaperonin GroEL 1 from Escherichia coli O1:K1 / APEC.